The sequence spans 186 residues: Ribosome-recycling factor (186 aa).

Belongs to the RRF family.

It localises to the cytoplasm. Responsible for the release of ribosomes from messenger RNA at the termination of protein biosynthesis. May increase the efficiency of translation by recycling ribosomes from one round of translation to another. This chain is Ribosome-recycling factor, found in Rickettsia prowazekii (strain Madrid E).